The primary structure comprises 79 residues: Putative membrane protein insertion efficiency factor (79 aa).

It belongs to the UPF0161 family.

The protein localises to the cell inner membrane. Functionally, could be involved in insertion of integral membrane proteins into the membrane. In Synechocystis sp. (strain ATCC 27184 / PCC 6803 / Kazusa), this protein is Putative membrane protein insertion efficiency factor.